Consider the following 273-residue polypeptide: 4-hydroxy-tetrahydrodipicolinate reductase (273 aa).

NAD(+)-binding positions include 12–17 (GAGGRM) and Glu-38. Position 39 (Arg-39) interacts with NADP(+). NAD(+)-binding positions include 102 to 104 (GTT) and 126 to 129 (AANF). The active-site Proton donor/acceptor is His-159. His-160 provides a ligand contact to (S)-2,3,4,5-tetrahydrodipicolinate. The Proton donor role is filled by Lys-163. 169 to 170 (GT) is a binding site for (S)-2,3,4,5-tetrahydrodipicolinate.

This sequence belongs to the DapB family. As to quaternary structure, homotetramer.

It localises to the cytoplasm. It catalyses the reaction (S)-2,3,4,5-tetrahydrodipicolinate + NAD(+) + H2O = (2S,4S)-4-hydroxy-2,3,4,5-tetrahydrodipicolinate + NADH + H(+). The catalysed reaction is (S)-2,3,4,5-tetrahydrodipicolinate + NADP(+) + H2O = (2S,4S)-4-hydroxy-2,3,4,5-tetrahydrodipicolinate + NADPH + H(+). Its pathway is amino-acid biosynthesis; L-lysine biosynthesis via DAP pathway; (S)-tetrahydrodipicolinate from L-aspartate: step 4/4. Functionally, catalyzes the conversion of 4-hydroxy-tetrahydrodipicolinate (HTPA) to tetrahydrodipicolinate. In Photorhabdus laumondii subsp. laumondii (strain DSM 15139 / CIP 105565 / TT01) (Photorhabdus luminescens subsp. laumondii), this protein is 4-hydroxy-tetrahydrodipicolinate reductase.